A 143-amino-acid chain; its full sequence is Nucleoside diphosphate kinase (143 aa).

Residues Lys-11, Phe-59, Arg-87, Thr-93, Arg-104, and Asn-114 each contribute to the ATP site. The Pros-phosphohistidine intermediate role is filled by His-117.

This sequence belongs to the NDK family. Homotetramer. Mg(2+) is required as a cofactor.

Its subcellular location is the cytoplasm. It carries out the reaction a 2'-deoxyribonucleoside 5'-diphosphate + ATP = a 2'-deoxyribonucleoside 5'-triphosphate + ADP. The enzyme catalyses a ribonucleoside 5'-diphosphate + ATP = a ribonucleoside 5'-triphosphate + ADP. Major role in the synthesis of nucleoside triphosphates other than ATP. The ATP gamma phosphate is transferred to the NDP beta phosphate via a ping-pong mechanism, using a phosphorylated active-site intermediate. The sequence is that of Nucleoside diphosphate kinase from Erwinia tasmaniensis (strain DSM 17950 / CFBP 7177 / CIP 109463 / NCPPB 4357 / Et1/99).